Reading from the N-terminus, the 141-residue chain is Protein X (141 aa).

The tract at residues Ser-25–Asp-52 is disordered. A mitochondrial targeting sequence region spans residues Pro-68–Leu-113.

This sequence belongs to the orthohepadnavirus protein X family. In terms of assembly, may form homodimer. May interact with host CEBPA, CFLAR, CREB1, DDB1, E4F1, HBXIP, HSPD1/HSP60, NFKBIA, POLR2E and SMAD4. Interacts with host SMC5-SMC6 complex and induces its degradation. Interacts with host TRPC4AP; leading to prevent ubiquitination of TRPC4AP. Interacts with host PLSCR1; this interaction promotes ubiquitination and degradation of HBx and impairs HBx-mediated cell proliferation. Post-translationally, a fraction may be phosphorylated in insect cells and HepG2 cells, a human hepatoblastoma cell line. Phosphorylated in vitro by host protein kinase C or mitogen-activated protein kinase. N-acetylated in insect cells.

It localises to the host cytoplasm. The protein localises to the host nucleus. Its subcellular location is the host mitochondrion. Its function is as follows. Multifunctional protein that plays a role in silencing host antiviral defenses and promoting viral transcription. Does not seem to be essential for HBV infection. May be directly involved in development of cirrhosis and liver cancer (hepatocellular carcinoma). Most of cytosolic activities involve modulation of cytosolic calcium. The effect on apoptosis is controversial depending on the cell types in which the studies have been conducted. May induce apoptosis by localizing in mitochondria and causing loss of mitochondrial membrane potential. May also modulate apoptosis by binding host CFLAR, a key regulator of the death-inducing signaling complex (DISC). Promotes viral transcription by using the host E3 ubiquitin ligase DDB1 to target the SMC5-SMC6 complex to proteasomal degradation. This host complex would otherwise bind to viral episomal DNA, and prevents its transcription. Moderately stimulates transcription of many different viral and cellular transcription elements. Promoters and enhancers stimulated by HBx contain DNA binding sites for NF-kappa-B, AP-1, AP-2, c-EBP, ATF/CREB, or the calcium-activated factor NF-AT. The chain is Protein X from Woodchuck hepatitis B virus (isolate 2) (WHV).